Reading from the N-terminus, the 292-residue chain is Ribosomal protein L11 methyltransferase (292 aa).

S-adenosyl-L-methionine is bound by residues threonine 144, glycine 165, aspartate 187, and asparagine 229.

This sequence belongs to the methyltransferase superfamily. PrmA family.

The protein resides in the cytoplasm. The catalysed reaction is L-lysyl-[protein] + 3 S-adenosyl-L-methionine = N(6),N(6),N(6)-trimethyl-L-lysyl-[protein] + 3 S-adenosyl-L-homocysteine + 3 H(+). Methylates ribosomal protein L11. This Pseudomonas fluorescens (strain ATCC BAA-477 / NRRL B-23932 / Pf-5) protein is Ribosomal protein L11 methyltransferase.